Here is a 546-residue protein sequence, read N- to C-terminus: Inosine-5'-monophosphate dehydrogenase (546 aa).

CBS domains lie at 135 to 197 (FILD…VTAI) and 198 to 254 (MSTD…PLAS). NAD(+) contacts are provided by residues 292-294 (DSS) and 342-344 (GMG). K(+)-binding residues include G344 and G346. S347 contacts IMP. C349 contributes to the K(+) binding site. C349 (thioimidate intermediate) is an active-site residue. IMP is bound by residues 382–384 (DGG), 405–406 (GG), and 430–434 (YRGMG). The Proton acceptor role is filled by R460. Q472 contributes to the IMP binding site. K(+) is bound by residues E531 and G532.

This sequence belongs to the IMPDH/GMPR family. Homotetramer. It depends on K(+) as a cofactor.

Its subcellular location is the cytoplasm. It catalyses the reaction IMP + NAD(+) + H2O = XMP + NADH + H(+). The protein operates within purine metabolism; XMP biosynthesis via de novo pathway; XMP from IMP: step 1/1. Mycophenolic acid (MPA) is a non-competitive inhibitor that prevents formation of the closed enzyme conformation by binding to the same site as the amobile flap. In contrast, mizoribine monophosphate (MZP) is a competitive inhibitor that induces the closed conformation. MPA is a potent inhibitor of mammalian IMPDHs but a poor inhibitor of the bacterial enzymes. MZP is a more potent inhibitor of bacterial IMPDH. Catalyzes the conversion of inosine 5'-phosphate (IMP) to xanthosine 5'-phosphate (XMP), the first committed and rate-limiting step in the de novo synthesis of guanine nucleotides, and therefore plays an important role in the regulation of cell growth. This Aspergillus fumigatus (strain ATCC MYA-4609 / CBS 101355 / FGSC A1100 / Af293) (Neosartorya fumigata) protein is Inosine-5'-monophosphate dehydrogenase.